The sequence spans 409 residues: Elongation factor Tu (409 aa).

The tr-type G domain maps to 10–214 (KPHVNIGTIG…AVDSYIPTPE (205 aa)). The G1 stretch occupies residues 19-26 (GHVDHGKT). A GTP-binding site is contributed by 19–26 (GHVDHGKT). T26 lines the Mg(2+) pocket. Positions 60-64 (GITIN) are G2. The interval 81-84 (DCPG) is G3. GTP is bound by residues 81–85 (DCPGH) and 136–139 (NKVD). Positions 136–139 (NKVD) are G4. The tract at residues 174–176 (SGL) is G5.

The protein belongs to the TRAFAC class translation factor GTPase superfamily. Classic translation factor GTPase family. EF-Tu/EF-1A subfamily. In terms of assembly, monomer.

The protein resides in the cytoplasm. It carries out the reaction GTP + H2O = GDP + phosphate + H(+). In terms of biological role, GTP hydrolase that promotes the GTP-dependent binding of aminoacyl-tRNA to the A-site of ribosomes during protein biosynthesis. This is Elongation factor Tu from Cyanothece sp. (strain PCC 7425 / ATCC 29141).